The following is a 467-amino-acid chain: Argininosuccinate lyase 1 (467 aa).

It belongs to the lyase 1 family. Argininosuccinate lyase subfamily.

The protein resides in the cytoplasm. The enzyme catalyses 2-(N(omega)-L-arginino)succinate = fumarate + L-arginine. The protein operates within amino-acid biosynthesis; L-arginine biosynthesis; L-arginine from L-ornithine and carbamoyl phosphate: step 3/3. This is Argininosuccinate lyase 1 from Rhizobium meliloti (strain 1021) (Ensifer meliloti).